We begin with the raw amino-acid sequence, 1159 residues long: RNA-directed RNA polymerase (1159 aa).

One can recognise a RdRp catalytic domain in the interval 545–727 (LTYGVLAEDT…KALASYTGLE (183 aa)).

The protein belongs to the reoviridae RNA-directed RNA polymerase family. As to quaternary structure, interacts with VP3 (Potential). Interacts with VP2 (Potential). Interacts with NSP5; this interaction is probably necessary for the formation of functional virus factories.

Its subcellular location is the virion. It catalyses the reaction RNA(n) + a ribonucleoside 5'-triphosphate = RNA(n+1) + diphosphate. RNA-directed RNA polymerase that is involved in both transcription and genome replication. Together with VP3 capping enzyme, forms an enzyme complex positioned near the channels situated at each of the five-fold vertices of the core. Following infection, the outermost layer of the virus is lost, leaving a double-layered particle (DLP) made up of the core and VP6 shell. VP1 then catalyzes the transcription of fully conservative plus-strand genomic RNAs that are extruded through the DLP's channels into the cytoplasm where they function as mRNAs for translation of viral proteins. One copy of each of the viral (+)RNAs is also recruited during core assembly, together with newly synthesized polymerase complexes and VP2. The polymerase of these novo-formed particles catalyzes the synthesis of complementary minus-strands leading to dsDNA formation. To do so, the polymerase specifically recognizes conserved 3' sequence(s) in plus-strand RNA templates. Once dsRNA synthesis is complete, the polymerase switches to the transcriptional mode, thus providing secondary transcription. This chain is RNA-directed RNA polymerase, found in Homo sapiens (Human).